The chain runs to 502 residues: 4,4'-diaponeurosporene oxygenase (502 aa).

Residue 8-20 participates in FAD binding; it reads IIGGGLGGISAAI.

Belongs to the carotenoid/retinoid oxidoreductase family. CrtP subfamily. Requires FAD as cofactor.

The catalysed reaction is all-trans-4,4'-diaponeurosporene + 2 AH2 + 2 O2 = 4,4'-diaponeurosporenal + 2 A + 3 H2O. It functions in the pathway carotenoid biosynthesis; staphyloxanthin biosynthesis; staphyloxanthin from farnesyl diphosphate: step 3/5. In terms of biological role, involved in the biosynthesis of the yellow-orange carotenoid staphyloxanthin, which plays a role in the virulence via its protective function against oxidative stress. Catalyzes the oxidation of the terminal methyl side group of 4,4'-diaponeurosporene to form 4,4'-diaponeurosporen-4-al. The protein is 4,4'-diaponeurosporene oxygenase of Staphylococcus haemolyticus (strain JCSC1435).